Consider the following 670-residue polypeptide: Outer dynein arm-docking complex subunit 1 (670 aa).

Coiled-coil stretches lie at residues 9 to 155 (SKEV…RYLN), 183 to 224 (AVRE…EQLH), and 302 to 381 (NFIN…IQLL). The interval 454 to 473 (KMAPLQPPDTLEDPPGFEAS) is disordered. The residue at position 517 (serine 517) is a Phosphoserine. 2 disordered regions span residues 526 to 596 (AGSS…ASSG) and 616 to 670 (VGSS…DSRG). Positions 584 to 596 (GHVTFGSTSASSG) are enriched in polar residues. The span at 650–670 (SSTGPASSTGPGSSTSKDSRG) shows a compositional bias: low complexity.

This sequence belongs to the ODA1/DCC2 family. Component of the outer dynein arm-docking complex along with ODAD2, ODAD3, ODAD4 and CLXN. Interacts with ODAD3. Interacts with ODAD4; this interaction may facilitate the recruitment and/or attachment of outer dynein arm docking complex proteins, including ODAD1, ODAD3, and ODAD4 to ciliary axonemes. Interacts with DNAH9. Interacts with MNS1. Interacts with PIERCE1 and PIERCE2; the interactions link the outer dynein arms docking complex (ODA-DC) to the internal microtubule inner proteins (MIP) in cilium axoneme. Expressed in nasal epithelial cells. Highly expressed in testis and also detected in lung, brain and kidney.

Its subcellular location is the cytoplasm. The protein localises to the cytoskeleton. It localises to the cilium axoneme. In terms of biological role, component of the outer dynein arm-docking complex (ODA-DC) that mediates outer dynein arms (ODA) binding onto the doublet microtubule. Involved in mediating assembly of both ODAs and their axonemal docking complex onto ciliary microtubules. The protein is Outer dynein arm-docking complex subunit 1 of Homo sapiens (Human).